A 277-amino-acid chain; its full sequence is Undecaprenyl-diphosphatase (277 aa).

Transmembrane regions (helical) follow at residues Ile-3–Pro-23, Val-43–Tyr-63, Leu-85–Ile-105, Leu-109–Ala-129, Thr-189–Phe-209, Ala-218–Ile-238, and Ser-249–Trp-269.

This sequence belongs to the UppP family.

Its subcellular location is the cell inner membrane. The catalysed reaction is di-trans,octa-cis-undecaprenyl diphosphate + H2O = di-trans,octa-cis-undecaprenyl phosphate + phosphate + H(+). Its function is as follows. Catalyzes the dephosphorylation of undecaprenyl diphosphate (UPP). Confers resistance to bacitracin. This chain is Undecaprenyl-diphosphatase, found in Albidiferax ferrireducens (strain ATCC BAA-621 / DSM 15236 / T118) (Rhodoferax ferrireducens).